We begin with the raw amino-acid sequence, 266 residues long: Beta-lactamase OXA-20 (266 aa).

An N-terminal signal peptide occupies residues 1 to 21 (MIIRFLALLFSAVVLVSLGHA). The active-site Acyl-ester intermediate is Ser-72. Lys-75 carries the post-translational modification N6-carboxylysine. 210–212 (KTG) is a substrate binding site.

The protein belongs to the class-D beta-lactamase family.

It catalyses the reaction a beta-lactam + H2O = a substituted beta-amino acid. With respect to regulation, inhibited by clavulanic acid. In terms of biological role, this is an oxacillin-hydrolyzing beta-lactamase. This Pseudomonas aeruginosa protein is Beta-lactamase OXA-20 (bla).